The primary structure comprises 342 residues: N-acetyl-gamma-glutamyl-phosphate reductase (342 aa).

Residue C149 is part of the active site.

This sequence belongs to the NAGSA dehydrogenase family. Type 1 subfamily.

Its subcellular location is the cytoplasm. The catalysed reaction is N-acetyl-L-glutamate 5-semialdehyde + phosphate + NADP(+) = N-acetyl-L-glutamyl 5-phosphate + NADPH + H(+). The protein operates within amino-acid biosynthesis; L-arginine biosynthesis; N(2)-acetyl-L-ornithine from L-glutamate: step 3/4. Catalyzes the NADPH-dependent reduction of N-acetyl-5-glutamyl phosphate to yield N-acetyl-L-glutamate 5-semialdehyde. The polypeptide is N-acetyl-gamma-glutamyl-phosphate reductase (Nitrosospira multiformis (strain ATCC 25196 / NCIMB 11849 / C 71)).